Reading from the N-terminus, the 79-residue chain is MDISKMNRYTAPVNFASLPLLTTFLCGVGLLLLATFTMIQVTSTKYNRNLLKELFIAATSSVFLGFGSVFLLLWVGIYV.

2 helical membrane passes run 19–39 (PLLT…FTMI) and 55–75 (FIAA…LLWV).

The protein belongs to the OST5 family. Component of the oligosaccharyltransferase (OST) complex.

The protein resides in the membrane. It functions in the pathway protein modification; protein glycosylation. Subunit of the oligosaccharyl transferase (OST) complex that catalyzes the initial transfer of a defined glycan (Glc(3)Man(9)GlcNAc(2) in eukaryotes) from the lipid carrier dolichol-pyrophosphate to an asparagine residue within an Asn-X-Ser/Thr consensus motif in nascent polypeptide chains, the first step in protein N-glycosylation. N-glycosylation occurs cotranslationally and the complex associates with the Sec61 complex at the channel-forming translocon complex that mediates protein translocation across the endoplasmic reticulum (ER). All subunits are required for a maximal enzyme activity. This Caenorhabditis elegans protein is Dolichyl-diphosphooligosaccharide--protein glycosyltransferase subunit TMEM258.